The chain runs to 297 residues: RNA polymerase sigma-F factor (297 aa).

The tract at residues 1–46 is disordered; the sequence is MTVPASTAPQVPPQQDPQVPHPQEPREEPHEEPPSPPAAPRPQSRG. Positions 10-22 are enriched in pro residues; that stretch reads QVPPQQDPQVPHP. Over residues 23–33 the composition is skewed to basic and acidic residues; sequence QEPREEPHEEP. The short motif at 101–114 is the Polymerase core binding element; it reads DVVQVGTIGLINAI. Positions 264 to 283 form a DNA-binding region, H-T-H motif; it reads QSQISAELGVSQMHVSRLLA.

It belongs to the sigma-70 factor family. SigB subfamily.

Its function is as follows. Sigma factors are initiation factors that promote the attachment of RNA polymerase to specific initiation sites and are then released. This sigma factor is required for normal spore maturation. This chain is RNA polymerase sigma-F factor (sigF), found in Kitasatospora aureofaciens (Streptomyces aureofaciens).